A 191-amino-acid polypeptide reads, in one-letter code: MRIGANGDETVWADEEFAGRDFRDEDLSRIRTERVVFTECDFSGVDLSESEHHGSAFRNCTFRRSTIWHSTFTNCSLLGSVFTECRIRPVTFVECDFTLAVLGGCDLRAVDLSDCRLREVSLVGADLRKAVLRRADLTGSRVQDARLEEADLRGTRVDPTFWTTAKVRGAKIDIEQALAYAAAHGLAVHGG.

In terms of domain architecture, Pentapeptide repeat spans 115 to 154 (CRLREVSLVGADLRKAVLRRADLTGSRVQDARLEEADLRG).

Belongs to the pentapeptide repeat protein family. As to quaternary structure, homodimer. Probably interacts with DNA gyrase.

When present on multicopy plasmids confers increased resistance to fluoroquinolone antibiotics such as ciprofloxacin and sparfloxacin but not the quinolone nalidixic acid. Forms a structure that exhibits size, shape and electrostatic similarity to B-form DNA; it may bind to DNA gyrase which is postulated to protect it from fluoroquinolones. In Mycolicibacterium smegmatis (strain ATCC 700084 / mc(2)155) (Mycobacterium smegmatis), this protein is Pentapeptide repeat protein MfpA.